A 169-amino-acid polypeptide reads, in one-letter code: HTH-type transcriptional regulator PchR (169 aa).

The 144-residue stretch at 10–153 (YDIYVRLLHL…VLKFLEQLTS (144 aa)) folds into the HTH marR-type domain. A DNA-binding region (H-T-H motif) is located at residues 64–87 (NAGIARKMNLSKANVTKISTKLIK).

As to quaternary structure, homodimer.

In terms of biological role, represses the expression of the yvmC-cypX operon, which is involved in pulcherriminic acid biosynthesis. Also negatively regulates yvmA, yvnB and its own expression. Positively regulates yisI expression. Acts by binding specifically to a 14-bp palindromic motif, the YvmB box, which is present in the promoter region of the target genes. The protein is HTH-type transcriptional regulator PchR of Bacillus subtilis (strain 168).